Consider the following 420-residue polypeptide: Dihydrolipoyllysine-residue succinyltransferase component of 2-oxoglutarate dehydrogenase complex (420 aa).

A Lipoyl-binding domain is found at 3–78; that stretch reads KINILVPDLP…ISQQTLGEIN (76 aa). N6-lipoyllysine is present on lysine 44. Catalysis depends on residues histidine 391 and aspartate 395.

The protein belongs to the 2-oxoacid dehydrogenase family. As to quaternary structure, forms a 24-polypeptide structural core with octahedral symmetry. Part of the 2-oxoglutarate dehydrogenase (OGDH) complex composed of E1 (2-oxoglutarate dehydrogenase), E2 (dihydrolipoamide succinyltransferase) and E3 (dihydrolipoamide dehydrogenase); the complex contains multiple copies of the three enzymatic components (E1, E2 and E3). Requires (R)-lipoate as cofactor.

It catalyses the reaction N(6)-[(R)-dihydrolipoyl]-L-lysyl-[protein] + succinyl-CoA = N(6)-[(R)-S(8)-succinyldihydrolipoyl]-L-lysyl-[protein] + CoA. It participates in amino-acid degradation; L-lysine degradation via saccharopine pathway; glutaryl-CoA from L-lysine: step 6/6. In terms of biological role, E2 component of the 2-oxoglutarate dehydrogenase (OGDH) complex which catalyzes the second step in the conversion of 2-oxoglutarate to succinyl-CoA and CO(2). The protein is Dihydrolipoyllysine-residue succinyltransferase component of 2-oxoglutarate dehydrogenase complex (sucB) of Buchnera aphidicola subsp. Acyrthosiphon pisum (strain APS) (Acyrthosiphon pisum symbiotic bacterium).